Reading from the N-terminus, the 435-residue chain is Methylenetetrahydrofolate--tRNA-(uracil-5-)-methyltransferase TrmFO (435 aa).

Gly9–Gly14 lines the FAD pocket.

It belongs to the MnmG family. TrmFO subfamily. It depends on FAD as a cofactor.

The protein localises to the cytoplasm. It carries out the reaction uridine(54) in tRNA + (6R)-5,10-methylene-5,6,7,8-tetrahydrofolate + NADH + H(+) = 5-methyluridine(54) in tRNA + (6S)-5,6,7,8-tetrahydrofolate + NAD(+). The enzyme catalyses uridine(54) in tRNA + (6R)-5,10-methylene-5,6,7,8-tetrahydrofolate + NADPH + H(+) = 5-methyluridine(54) in tRNA + (6S)-5,6,7,8-tetrahydrofolate + NADP(+). Functionally, catalyzes the folate-dependent formation of 5-methyl-uridine at position 54 (M-5-U54) in all tRNAs. This Staphylococcus aureus (strain Newman) protein is Methylenetetrahydrofolate--tRNA-(uracil-5-)-methyltransferase TrmFO.